Consider the following 607-residue polypeptide: Threonine--tRNA ligase (607 aa).

Residues 200-502 are catalytic; sequence DHRKLGRELG…LIEEYAGDFP (303 aa). Residues Cys-299, His-350, and His-479 each coordinate Zn(2+).

It belongs to the class-II aminoacyl-tRNA synthetase family. Homodimer. Requires Zn(2+) as cofactor.

It is found in the cytoplasm. The enzyme catalyses tRNA(Thr) + L-threonine + ATP = L-threonyl-tRNA(Thr) + AMP + diphosphate + H(+). Functionally, catalyzes the attachment of threonine to tRNA(Thr) in a two-step reaction: L-threonine is first activated by ATP to form Thr-AMP and then transferred to the acceptor end of tRNA(Thr). Also edits incorrectly charged L-seryl-tRNA(Thr). This chain is Threonine--tRNA ligase, found in Synechococcus sp. (strain ATCC 27144 / PCC 6301 / SAUG 1402/1) (Anacystis nidulans).